Reading from the N-terminus, the 113-residue chain is MEILMAVLAGIIFMAATYLLLSKSLLRVIIGTALLSHGVHLMLLTMGGLKKGAAPILSEHAKSFVDPLPQALILTAIVISFGVTSFILVMAFRAYQELKSDDMDQMRGNDQHE.

The next 3 membrane-spanning stretches (helical) occupy residues 4–21 (LMAVLAGIIFMAATYLLL), 28–47 (VIIGTALLSHGVHLMLLTMG), and 67–89 (PLPQALILTAIVISFGVTSFILV).

The protein belongs to the CPA3 antiporters (TC 2.A.63) subunit C family. As to quaternary structure, forms a heterooligomeric complex that consists of seven subunits: MrpA, MrpB, MrpC, MrpD, MrpE, MrpF and MrpG.

The protein resides in the cell membrane. Mrp complex is a Na(+)/H(+) antiporter that is considered to be the major Na(+) excretion system in B.subtilis. Has a major role in Na(+) resistance and a minor role in Na(+)- and K(+)-dependent pH homeostasis as compared to TetB. MrpA may be the actual Na(+)/H(+) antiporter, although the six other Mrp proteins are all required for Na(+)/H(+) antiport activity and Na(+) resistance. MrpA is required for initiation of sporulation when external Na(+) concentration increases. Also transports Li(+) but not K(+), Ca(2+) or Mg(2+). This chain is Na(+)/H(+) antiporter subunit C (mrpC), found in Bacillus subtilis (strain 168).